The primary structure comprises 108 residues: UPF0102 protein SO_0299 (108 aa).

This sequence belongs to the UPF0102 family.

This Shewanella oneidensis (strain ATCC 700550 / JCM 31522 / CIP 106686 / LMG 19005 / NCIMB 14063 / MR-1) protein is UPF0102 protein SO_0299.